The following is a 529-amino-acid chain: Bifunctional purine biosynthesis protein PurH (529 aa).

One can recognise an MGS-like domain in the interval 2 to 149; that stretch reads TDLSPVRRAL…KNHAFVNVVV (148 aa).

This sequence belongs to the PurH family.

The catalysed reaction is (6R)-10-formyltetrahydrofolate + 5-amino-1-(5-phospho-beta-D-ribosyl)imidazole-4-carboxamide = 5-formamido-1-(5-phospho-D-ribosyl)imidazole-4-carboxamide + (6S)-5,6,7,8-tetrahydrofolate. It carries out the reaction IMP + H2O = 5-formamido-1-(5-phospho-D-ribosyl)imidazole-4-carboxamide. It participates in purine metabolism; IMP biosynthesis via de novo pathway; 5-formamido-1-(5-phospho-D-ribosyl)imidazole-4-carboxamide from 5-amino-1-(5-phospho-D-ribosyl)imidazole-4-carboxamide (10-formyl THF route): step 1/1. It functions in the pathway purine metabolism; IMP biosynthesis via de novo pathway; IMP from 5-formamido-1-(5-phospho-D-ribosyl)imidazole-4-carboxamide: step 1/1. In Ruegeria pomeroyi (strain ATCC 700808 / DSM 15171 / DSS-3) (Silicibacter pomeroyi), this protein is Bifunctional purine biosynthesis protein PurH.